Consider the following 346-residue polypeptide: E3 ubiquitin-protein ligase ARK2C (346 aa).

Disordered regions lie at residues 23–76 (PFQR…QHSG) and 267–288 (PHKY…GEES). Residues 266–268 (FPH) are ubiquitin binding. Over residues 275–284 (PQDGKGKKDE) the composition is skewed to basic and acidic residues. Residues cysteine 294 and cysteine 297 each coordinate Zn(2+). The RING-type; atypical zinc finger occupies 294–335 (CTICLSMLEDGEDVRRLPCMHLFHQLCVDQWLAMSKKCPICR). Residues 309–313 (RLPCM) are ubiquitin binding. The Zn(2+) site is built by histidine 317 and cysteine 320.

The protein belongs to the Arkadia family. As to quaternary structure, monomer; binding to the ubiquitin-conjugating enzyme E2 does not trigger homodimerization.

It localises to the nucleus. It catalyses the reaction S-ubiquitinyl-[E2 ubiquitin-conjugating enzyme]-L-cysteine + [acceptor protein]-L-lysine = [E2 ubiquitin-conjugating enzyme]-L-cysteine + N(6)-ubiquitinyl-[acceptor protein]-L-lysine.. Binds free ubiquitin non-covalently via its RING-type zinc finger. Ubiquitin-binding leads to enhance the E3 ubiquitin-protein ligase activity by stabilizing the ubiquitin-conjugating enzyme E2 (donor ubiquitin) in the 'closed' conformation and activating ubiquitin transfer. Functionally, E3 ubiquitin-protein ligase that acts as a regulator of motor axon elongation. Required for efficient motor axon extension in the dorsal forelimb by enhancing the transcriptional responses of the SMAD1/SMAD5/SMAD8 effectors, which are activated downstream of BMP. Acts by mediating ubiquitination and degradation of SMAD inhibitors such as SMAD6, SMAD7, SKI and SNON isoform of SKIL. This is E3 ubiquitin-protein ligase ARK2C from Homo sapiens (Human).